The sequence spans 342 residues: N-acetyl-gamma-glutamyl-phosphate reductase (342 aa).

The active site involves Cys147.

The protein belongs to the NAGSA dehydrogenase family. Type 1 subfamily.

It localises to the cytoplasm. It carries out the reaction N-acetyl-L-glutamate 5-semialdehyde + phosphate + NADP(+) = N-acetyl-L-glutamyl 5-phosphate + NADPH + H(+). Its pathway is amino-acid biosynthesis; L-arginine biosynthesis; N(2)-acetyl-L-ornithine from L-glutamate: step 3/4. Its function is as follows. Catalyzes the NADPH-dependent reduction of N-acetyl-5-glutamyl phosphate to yield N-acetyl-L-glutamate 5-semialdehyde. The chain is N-acetyl-gamma-glutamyl-phosphate reductase from Campylobacter jejuni subsp. doylei (strain ATCC BAA-1458 / RM4099 / 269.97).